The following is a 391-amino-acid chain: Mannose-6-phosphate isomerase (391 aa).

4 residues coordinate Zn(2+): glutamine 97, histidine 99, glutamate 134, and histidine 255. Arginine 274 is a catalytic residue.

It belongs to the mannose-6-phosphate isomerase type 1 family. Zn(2+) serves as cofactor.

Its subcellular location is the cytoplasm. It catalyses the reaction D-mannose 6-phosphate = D-fructose 6-phosphate. Functionally, involved in the conversion of glucose to GDP-L-fucose, which can be converted to L-fucose, a capsular polysaccharide. This Salmonella typhimurium (strain LT2 / SGSC1412 / ATCC 700720) protein is Mannose-6-phosphate isomerase (manA).